Consider the following 576-residue polypeptide: Alkaline phosphatase PhoD (576 aa).

Positions Met1–Ala32 are cleaved as a signal peptide. Zn(2+)-binding residues include Asp68 and Thr107. Thr107 (phosphothreonine intermediate) is an active-site residue. Cys108 and Cys144 are joined by a disulfide. Substrate contacts are provided by residues Asn128 and Lys188–Arg190. Residues Cys248 and Cys332 are joined by a disulfide bond. Residues Asp318, His322, Asp363, His364, and His508 each contribute to the Zn(2+) site. Cys562 and Cys573 are oxidised to a cystine.

Monomer. The cofactor is Zn(2+).

It carries out the reaction a phosphate monoester + H2O = an alcohol + phosphate. Functionally, alkaline phosphatase with broad substrate specificity. Has phosphatase activity towards nucleotide and sugar phosphates with a preference to nucleotide phosphates. Has no phosphodiesterase activity. The chain is Alkaline phosphatase PhoD from Zymomonas mobilis subsp. mobilis (strain ATCC 31821 / ZM4 / CP4).